We begin with the raw amino-acid sequence, 569 residues long: Matrix metalloproteinase-21 (569 aa).

Residues 1–24 (MLAASIFRPTLLLCWLAAPWPTQP) form the signal peptide. Positions 25–144 (ESLFHSRDRS…GPPPRARSRR (120 aa)) are excised as a propeptide. Positions 115-122 (PRCGVPDM) match the Cysteine switch motif. The segment at 115–166 (PRCGVPDMRPPPPSAPPSPPGPPPRARSRRSPRAPLSLSRRGWQPRGYPDGG) is disordered. Cysteine 117 contributes to the Zn(2+) binding site. A compositionally biased stretch (pro residues) spans 122-139 (MRPPPPSAPPSPPGPPPR). The segment covering 147-156 (RAPLSLSRRG) has biased composition (low complexity). Histidine 283 is a binding site for Zn(2+). Glutamate 284 is a catalytic residue. Zn(2+) contacts are provided by histidine 287 and histidine 293. Cysteine 329 and cysteine 560 are oxidised to a cystine. Hemopexin repeat units lie at residues 330–389 (EGSF…WPGI), 391–447 (THNI…FPGI), 448–496 (PSPL…FPAV), and 503–559 (FRNI…WFDV). An N-linked (GlcNAc...) asparagine glycan is attached at asparagine 372.

The protein belongs to the peptidase M10A family. Zn(2+) is required as a cofactor. Ca(2+) serves as cofactor. The precursor is cleaved by a furin endopeptidase. Identified in fetal brain, kidney and liver. In adult tissues found primarily in ovary, kidney, liver, lung, placenta, brain and peripheral blood leukocytes. Expressed as well in various cancer cell lines.

The protein resides in the secreted. Plays a specialized role in the generation of left-right asymmetry during embryogenesis. May act as a negative regulator of the NOTCH-signaling pathway. Cleaves alpha-1-antitrypsin. In Homo sapiens (Human), this protein is Matrix metalloproteinase-21 (MMP21).